The following is a 1065-amino-acid chain: Probable importin-7 homolog (1065 aa).

Positions alanine 25–histidine 98 constitute an Importin N-terminal domain. A disordered region spans residues glutamate 958–glutamate 996. The segment covering leucine 963–glutamate 996 has biased composition (acidic residues).

Belongs to the importin beta family.

It localises to the cytoplasm. The protein resides in the nucleus. May function in nuclear protein import. The sequence is that of Probable importin-7 homolog from Dictyostelium discoideum (Social amoeba).